The chain runs to 213 residues: AN1-type zinc finger protein 5 (213 aa).

Residues 8-42 (TPGPMLCSTGCGFYGNPRTNGMCSVCYKEHLQRQQ) form an A20-type zinc finger. Cys-14, Cys-18, Cys-30, and Cys-33 together coordinate Zn(2+). Positions 39–149 (QRQQNSGRMS…EEKAPELPKP (111 aa)) are disordered. Over residues 40–66 (RQQNSGRMSPMGTASGSNSPTSDSASV) the composition is skewed to polar residues. Ser-48 and Ser-58 each carry phosphoserine. A compositionally biased stretch (low complexity) spans 120 to 138 (SEPVVTQPSPSVSQPSSSQ). Positions 139–148 (SEEKAPELPK) are enriched in basic and acidic residues. The segment at 148 to 194 (KPKKNRCFMCRKKVGLTGFDCRCGNLFCGLHRYSDKHNCPYDYKAEA) adopts an AN1-type zinc-finger fold. Positions 154, 157, 168, 170, 175, 178, 184, and 186 each coordinate Zn(2+). Lys-209 is modified (N6-acetyllysine).

Homooligomer and/or heterooligomer. Interacts (via A20-type domain) with IKBKG and RIPK1 and with TRAF6 (via AN1-type domain). Interacts with ubiquitin and polyubiquitinated proteins. Identified in a heterotrimeric complex with ubiquitin and SQSTM1, where ZFAND5 and SQSTM1 both interact with the same ubiquitin molecule.

It localises to the cytoplasm. Its function is as follows. Involved in protein degradation via the ubiquitin-proteasome system. May act by anchoring ubiquitinated proteins to the proteasome. Plays a role in ubiquitin-mediated protein degradation during muscle atrophy. Plays a role in the regulation of NF-kappa-B activation and apoptosis. Inhibits NF-kappa-B activation triggered by overexpression of RIPK1 and TRAF6 but not of RELA. Also inhibits tumor necrosis factor (TNF), IL-1 and TLR4-induced NF-kappa-B activation in a dose-dependent manner. Overexpression sensitizes cells to TNF-induced apoptosis. Is a potent inhibitory factor for osteoclast differentiation. The polypeptide is AN1-type zinc finger protein 5 (Zfand5) (Rattus norvegicus (Rat)).